Reading from the N-terminus, the 822-residue chain is Cation/H(+) antiporter 3 (822 aa).

Transmembrane regions (helical) follow at residues 55 to 75 (FPHLQMIFLIISFLWQFLHFF), 116 to 136 (EIVFSLTAACSYMMFWFLMGV), 150 to 170 (AITIGLSSVLLSTLVCSVIFF), 190 to 210 (YVVIYSIQCLSSFPVVGNLLF), 224 to 244 (ISSAVISDFSTSILASVLIFM), 274 to 294 (IVVLFVCIAIYVFRPLMFYII), 305 to 325 (AIYLSTIIVMVSGSAILANWC), 331 to 351 (MGPFILGLAVPHGPPLGSAII), 362 to 382 (FLPFFIASSSTEIDISALFGW), 388 to 408 (IILIMVTSFVVKFIFTTVPAL), 418 to 438 (FALSLIMSFKGIFELGAYALA), and 447 to 467 (ETFTVACLYITLNSAIIPPIL).

The protein belongs to the monovalent cation:proton antiporter 2 (CPA2) transporter (TC 2.A.37) family. CHX (TC 2.A.37.4) subfamily.

The protein resides in the membrane. May operate as a cation/H(+) antiporter. In Arabidopsis thaliana (Mouse-ear cress), this protein is Cation/H(+) antiporter 3 (CHX3).